The sequence spans 161 residues: Cytochrome b6-f complex subunit 4 (161 aa).

The next 3 helical transmembrane spans lie at 37 to 57 (LLYI…GLAV), 96 to 116 (LLGV…PFIE), and 132 to 152 (SVFL…TLPI).

The protein belongs to the cytochrome b family. PetD subfamily. The 4 large subunits of the cytochrome b6-f complex are cytochrome b6, subunit IV (17 kDa polypeptide, PetD), cytochrome f and the Rieske protein, while the 4 small subunits are PetG, PetL, PetM and PetN. The complex functions as a dimer.

The protein localises to the cellular thylakoid membrane. Functionally, component of the cytochrome b6-f complex, which mediates electron transfer between photosystem II (PSII) and photosystem I (PSI), cyclic electron flow around PSI, and state transitions. The sequence is that of Cytochrome b6-f complex subunit 4 from Acaryochloris marina (strain MBIC 11017).